The chain runs to 213 residues: Na(+)-translocating NADH-quinone reductase subunit D (213 aa).

Transmembrane regions (helical) follow at residues 14–34 (ALWINNQPLVAILGICSALAV), 42–62 (LTMGLAVSFVTGFASFVVSLL), 77–97 (IIISLFVILIDQFLKAFFFNI), 101–121 (LSVFVGLIITNCIVMGRAESM), 131–151 (FLDGLGSGLGYGWVLVCISII), 154–174 (LFGFGTILGFHIIPKIFYASA), and 183–203 (LGLMVLAPSAFFLLGIMVWLV).

It belongs to the NqrDE/RnfAE family. As to quaternary structure, composed of six subunits; NqrA, NqrB, NqrC, NqrD, NqrE and NqrF.

The protein resides in the cell inner membrane. The catalysed reaction is a ubiquinone + n Na(+)(in) + NADH + H(+) = a ubiquinol + n Na(+)(out) + NAD(+). Its function is as follows. NQR complex catalyzes the reduction of ubiquinone-1 to ubiquinol by two successive reactions, coupled with the transport of Na(+) ions from the cytoplasm to the periplasm. NqrA to NqrE are probably involved in the second step, the conversion of ubisemiquinone to ubiquinol. The chain is Na(+)-translocating NADH-quinone reductase subunit D from Chlamydia muridarum (strain MoPn / Nigg).